The chain runs to 1209 residues: Protein FAM83H (1209 aa).

The DUF1669 stretch occupies residues 1–286 (MARRSQSSSQ…LFAQSEPLVP (286 aa)). Residues 1-286 (MARRSQSSSQ…LFAQSEPLVP (286 aa)) form a mediates interaction with CSNK1A1 and is required for FAM83H activity in keratin cytoskeleton organization region. Serine 512, serine 513, serine 515, serine 522, serine 639, and serine 660 each carry phosphoserine. Disordered regions lie at residues 512–545 (SSAS…NLGQ), 615–664 (RDLL…FRSR), and 735–760 (KGPA…VVSQ). Threonine 749 is modified (phosphothreonine). 4 positions are modified to phosphoserine: serine 752, serine 778, serine 806, and serine 871. The segment at 829-1056 (AQGRSLSPQG…EERGSRVRLA (228 aa)) is disordered. Threonine 873 bears the Phosphothreonine mark. Serine 882, serine 893, serine 904, and serine 915 each carry phosphoserine. Residues 915–942 (SPTSGFPNRRGSPTTGLMEQKGSPTSTY) are compositionally biased toward polar residues. Threonine 917 bears the Phosphothreonine mark. A Phosphoserine modification is found at serine 926. The residue at position 928 (threonine 928) is a Phosphothreonine. Serine 937, serine 948, serine 959, serine 970, serine 977, serine 1035, serine 1041, and serine 1057 each carry phosphoserine. Threonine 1072 carries the phosphothreonine modification. Disordered regions lie at residues 1076 to 1147 (LEQI…EERD) and 1174 to 1193 (EAGS…RDSK). Phosphoserine is present on residues serine 1080, serine 1098, and serine 1177.

Belongs to the FAM83 family. In terms of assembly, directly interacts (via DUF1669) with casein kinase isoforms CSNK1A1, CSNK1A1L, CSNK1D and CSNK1E. Interaction with CSNK1A1 recruits CSNK1A1 to keratin filaments. Interacts with KRT18 and probably other keratins. In terms of tissue distribution, expressed in tooth follicle, eye, liver and kidney.

It is found in the cytoplasm. The protein resides in the cytoskeleton. May play a major role in the structural organization and calcification of developing enamel. May play a role in keratin cytoskeleton disassembly by recruiting CSNK1A1 to keratin filaments. Thereby, it may regulate epithelial cell migration. This is Protein FAM83H from Mus musculus (Mouse).